Consider the following 697-residue polypeptide: Probable glutamine--tRNA ligase (697 aa).

Residues 204-214 carry the 'HIGH' region motif; sequence PEPNGILHIGH. Residues 205 to 207 and 211 to 217 contribute to the ATP site; these read EPN and HIGHAKA. L-glutamine contacts are provided by aspartate 237 and tyrosine 386. ATP contacts are provided by residues threonine 405, 434 to 435, and 442 to 444; these read RL and LSK. A 'KMSKS' region motif is present at residues 441 to 445; the sequence is VLSKR.

It belongs to the class-I aminoacyl-tRNA synthetase family.

It catalyses the reaction tRNA(Gln) + L-glutamine + ATP = L-glutaminyl-tRNA(Gln) + AMP + diphosphate. This chain is Probable glutamine--tRNA ligase, found in Encephalitozoon cuniculi (strain GB-M1) (Microsporidian parasite).